The chain runs to 654 residues: Mitochondrial-processing peptidase subunit alpha-1 (654 aa).

A disordered region spans residues 73–94; it reads SSSSYKGNNNNNNKLSYTTSSN. A coiled-coil region spans residues 381 to 446; it reads HKNHLKSQLQ…EQLELQQVKE (66 aa).

The protein belongs to the peptidase M16 family. In terms of assembly, heterodimer of alpha and beta subunits, forming the mitochondrial processing protease (MPP) in which subunit alpha is involved in substrate recognition and binding and subunit beta is the catalytic subunit.

It localises to the mitochondrion matrix. Functionally, substrate recognition and binding subunit of the essential mitochondrial processing protease (MPP), which cleaves the mitochondrial sequence off newly imported precursors proteins. This Dictyostelium discoideum (Social amoeba) protein is Mitochondrial-processing peptidase subunit alpha-1 (mppA1).